Reading from the N-terminus, the 172-residue chain is NADH dehydrogenase [ubiquinone] 1 alpha subcomplex subunit 8 (172 aa).

CHCH domains lie at glycine 33–isoleucine 74 and lysine 75–valine 118. 4 short sequence motifs (cx9C motif) span residues cysteine 36–cysteine 46, cysteine 56–cysteine 66, cysteine 78–cysteine 88, and cysteine 100–cysteine 110. Cystine bridges form between cysteine 36-cysteine 66, cysteine 46-cysteine 56, cysteine 78-cysteine 110, and cysteine 88-cysteine 100. The interval threonine 133–lysine 159 is disordered. A compositionally biased stretch (basic and acidic residues) spans proline 146–lysine 159.

It belongs to the complex I NDUFA8 subunit family. As to quaternary structure, complex I is composed of 45 different subunits.

The protein localises to the mitochondrion inner membrane. It is found in the mitochondrion intermembrane space. Its subcellular location is the mitochondrion. Its function is as follows. Accessory subunit of the mitochondrial membrane respiratory chain NADH dehydrogenase (Complex I), that is believed not to be involved in catalysis. Complex I functions in the transfer of electrons from NADH to the respiratory chain. The immediate electron acceptor for the enzyme is believed to be ubiquinone. The protein is NADH dehydrogenase [ubiquinone] 1 alpha subcomplex subunit 8 (NDUFA8) of Pongo abelii (Sumatran orangutan).